Here is a 334-residue protein sequence, read N- to C-terminus: Holliday junction branch migration complex subunit RuvB (334 aa).

A large ATPase domain (RuvB-L) region spans residues 1 to 181 (MHDRLISGTE…FGIVQRLEFY (181 aa)). ATP-binding positions include Ile-20, Arg-21, Gly-62, Lys-65, Thr-66, Thr-67, 128–130 (EDY), Arg-171, Tyr-181, and Arg-218. Thr-66 contacts Mg(2+). Positions 182 to 252 (SVEDLTHIVT…MAQRALDMLN (71 aa)) are small ATPAse domain (RuvB-S). A head domain (RuvB-H) region spans residues 255-334 (KDGLDTLDRR…FGLTPPEPKN (80 aa)). DNA-binding residues include Arg-310 and Arg-315.

The protein belongs to the RuvB family. In terms of assembly, homohexamer. Forms an RuvA(8)-RuvB(12)-Holliday junction (HJ) complex. HJ DNA is sandwiched between 2 RuvA tetramers; dsDNA enters through RuvA and exits via RuvB. An RuvB hexamer assembles on each DNA strand where it exits the tetramer. Each RuvB hexamer is contacted by two RuvA subunits (via domain III) on 2 adjacent RuvB subunits; this complex drives branch migration. In the full resolvosome a probable DNA-RuvA(4)-RuvB(12)-RuvC(2) complex forms which resolves the HJ.

The protein resides in the cytoplasm. The catalysed reaction is ATP + H2O = ADP + phosphate + H(+). Functionally, the RuvA-RuvB-RuvC complex processes Holliday junction (HJ) DNA during genetic recombination and DNA repair, while the RuvA-RuvB complex plays an important role in the rescue of blocked DNA replication forks via replication fork reversal (RFR). RuvA specifically binds to HJ cruciform DNA, conferring on it an open structure. The RuvB hexamer acts as an ATP-dependent pump, pulling dsDNA into and through the RuvAB complex. RuvB forms 2 homohexamers on either side of HJ DNA bound by 1 or 2 RuvA tetramers; 4 subunits per hexamer contact DNA at a time. Coordinated motions by a converter formed by DNA-disengaged RuvB subunits stimulates ATP hydrolysis and nucleotide exchange. Immobilization of the converter enables RuvB to convert the ATP-contained energy into a lever motion, pulling 2 nucleotides of DNA out of the RuvA tetramer per ATP hydrolyzed, thus driving DNA branch migration. The RuvB motors rotate together with the DNA substrate, which together with the progressing nucleotide cycle form the mechanistic basis for DNA recombination by continuous HJ branch migration. Branch migration allows RuvC to scan DNA until it finds its consensus sequence, where it cleaves and resolves cruciform DNA. The sequence is that of Holliday junction branch migration complex subunit RuvB from Acinetobacter baylyi (strain ATCC 33305 / BD413 / ADP1).